A 390-amino-acid polypeptide reads, in one-letter code: Chorismate synthase (390 aa).

NADP(+) is bound by residues R39 and R45. Residues 132 to 134, 253 to 254, G298, 313 to 317, and R339 each bind FMN; these read RSS, NA, and KPIPT.

The protein belongs to the chorismate synthase family. As to quaternary structure, homotetramer. The cofactor is FMNH2.

The enzyme catalyses 5-O-(1-carboxyvinyl)-3-phosphoshikimate = chorismate + phosphate. It functions in the pathway metabolic intermediate biosynthesis; chorismate biosynthesis; chorismate from D-erythrose 4-phosphate and phosphoenolpyruvate: step 7/7. Its function is as follows. Catalyzes the anti-1,4-elimination of the C-3 phosphate and the C-6 proR hydrogen from 5-enolpyruvylshikimate-3-phosphate (EPSP) to yield chorismate, which is the branch point compound that serves as the starting substrate for the three terminal pathways of aromatic amino acid biosynthesis. This reaction introduces a second double bond into the aromatic ring system. This chain is Chorismate synthase, found in Bacillus velezensis (strain DSM 23117 / BGSC 10A6 / LMG 26770 / FZB42) (Bacillus amyloliquefaciens subsp. plantarum).